The chain runs to 229 residues: Dihydrofolate reductase (229 aa).

The DHFR domain occupies 11-227 (SITAVVAATA…VKYIFEMWVL (217 aa)). NADP(+) contacts are provided by residues Ala17 and 23–29 (GIGLNGG). 37–42 (EMKYFA) serves as a coordination point for substrate. 64 to 66 (RKT) serves as a coordination point for NADP(+). Arg80 provides a ligand contact to substrate. NADP(+) contacts are provided by residues 86–88 (SGK) and 127–134 (GGATLYTS).

The protein belongs to the dihydrofolate reductase family. As to quaternary structure, monomer.

It carries out the reaction (6S)-5,6,7,8-tetrahydrofolate + NADP(+) = 7,8-dihydrofolate + NADPH + H(+). The protein operates within cofactor biosynthesis; tetrahydrofolate biosynthesis; 5,6,7,8-tetrahydrofolate from 7,8-dihydrofolate: step 1/1. Key enzyme in folate metabolism. Catalyzes an essential reaction for de novo glycine and purine synthesis, and for DNA precursor synthesis. This Cryptococcus neoformans var. neoformans serotype D (strain JEC21 / ATCC MYA-565) (Filobasidiella neoformans) protein is Dihydrofolate reductase (DFR1).